We begin with the raw amino-acid sequence, 209 residues long: Putative 3-methyladenine DNA glycosylase (209 aa).

The tract at residues 189 to 209 (YISKTQPGPPPKKRKKGLESS) is disordered. The segment covering 199 to 209 (PKKRKKGLESS) has biased composition (basic residues).

Belongs to the DNA glycosylase MPG family.

The chain is Putative 3-methyladenine DNA glycosylase from Chlorobaculum tepidum (strain ATCC 49652 / DSM 12025 / NBRC 103806 / TLS) (Chlorobium tepidum).